Here is a 493-residue protein sequence, read N- to C-terminus: D-aminoacyl-tRNA deacylase (493 aa).

A compositionally biased stretch (basic and acidic residues) spans 22–37 (DLGDWERRDDPSRPDA). Disordered stretches follow at residues 22–44 (DLGD…GTYY) and 441–493 (PEGP…EPSE).

It belongs to the DtdA deacylase family. As to quaternary structure, monomer. It depends on Zn(2+) as a cofactor.

It carries out the reaction a D-aminoacyl-tRNA + H2O = a tRNA + a D-alpha-amino acid + H(+). The catalysed reaction is glycyl-tRNA(Ala) + H2O = tRNA(Ala) + glycine + H(+). Functionally, D-aminoacyl-tRNA deacylase with broad substrate specificity. By recycling D-aminoacyl-tRNA to D-amino acids and free tRNA molecules, this enzyme counteracts the toxicity associated with the formation of D-aminoacyl-tRNA entities in vivo. In Halorubrum lacusprofundi (strain ATCC 49239 / DSM 5036 / JCM 8891 / ACAM 34), this protein is D-aminoacyl-tRNA deacylase.